The following is a 382-amino-acid chain: uncharacterized protein (382 aa).

Helical transmembrane passes span 8–28 (VMLL…LNTL), 45–65 (MVSS…GYLI), 75–95 (YLAS…VGFW), 102–122 (FIAG…LMCS), 131–151 (LLAA…LLVS), 157–177 (LLHV…PLLF), 204–224 (LGVN…GLMP), 231–251 (GMAN…GILG), 274–294 (VVIL…ALFI), 325–345 (ALLL…AMLM), and 349–369 (SDNL…LMLL).

Belongs to the major facilitator superfamily. YcaD (TC 2.A.1.26) family.

It localises to the cell inner membrane. This is an uncharacterized protein from Salmonella gallinarum (strain 287/91 / NCTC 13346).